The sequence spans 140 residues: Protein SamA (140 aa).

Catalysis depends on for autocatalytic cleavage activity residues serine 61 and lysine 98.

Belongs to the peptidase S24 family.

Involved in UV protection and mutation. The polypeptide is Protein SamA (samA) (Salmonella typhimurium (strain LT2 / SGSC1412 / ATCC 700720)).